The primary structure comprises 201 residues: Recombination protein RecR (201 aa).

The segment at 60-75 (CTSCGNVDTSDPCTIC) adopts a C4-type zinc-finger fold. In terms of domain architecture, Toprim spans 83 to 178 (TTLVVVEDVS…KVTRLAHGVP (96 aa)).

It belongs to the RecR family.

Its function is as follows. May play a role in DNA repair. It seems to be involved in an RecBC-independent recombinational process of DNA repair. It may act with RecF and RecO. This Methylobacterium radiotolerans (strain ATCC 27329 / DSM 1819 / JCM 2831 / NBRC 15690 / NCIMB 10815 / 0-1) protein is Recombination protein RecR.